Consider the following 659-residue polypeptide: Acetyl-coenzyme A synthetase (659 aa).

Residues 1–35 (MATEQTKGQSSESISSVLSERRKFPPPEAFSSQSH) are disordered. CoA is bound by residues 205-208 (RRGS), threonine 323, and asparagine 347. ATP-binding positions include 399-401 (GEP), 423-428 (DTWWQT), aspartate 512, and arginine 527. Residue serine 535 participates in CoA binding. Arginine 538 serves as a coordination point for ATP. Mg(2+)-binding residues include valine 549, histidine 551, and valine 554. Lysine 621 carries the post-translational modification N6-acetyllysine.

It belongs to the ATP-dependent AMP-binding enzyme family. It depends on Mg(2+) as a cofactor. Acetylated. Deacetylation by the SIR2-homolog deacetylase activates the enzyme.

It catalyses the reaction acetate + ATP + CoA = acetyl-CoA + AMP + diphosphate. In terms of biological role, catalyzes the conversion of acetate into acetyl-CoA (AcCoA), an essential intermediate at the junction of anabolic and catabolic pathways. AcsA undergoes a two-step reaction. In the first half reaction, AcsA combines acetate with ATP to form acetyl-adenylate (AcAMP) intermediate. In the second half reaction, it can then transfer the acetyl group from AcAMP to the sulfhydryl group of CoA, forming the product AcCoA. The sequence is that of Acetyl-coenzyme A synthetase from Chlorobaculum tepidum (strain ATCC 49652 / DSM 12025 / NBRC 103806 / TLS) (Chlorobium tepidum).